Here is a 637-residue protein sequence, read N- to C-terminus: DNA gyrase subunit B (637 aa).

A Toprim domain is found at 420–534 (CEIYIVEGDS…EGHVFIAQPP (115 aa)). Residues glutamate 426, aspartate 499, and aspartate 501 each contribute to the Mg(2+) site.

The protein belongs to the type II topoisomerase GyrB family. As to quaternary structure, heterotetramer, composed of two GyrA and two GyrB chains. In the heterotetramer, GyrA contains the active site tyrosine that forms a transient covalent intermediate with DNA, while GyrB binds cofactors and catalyzes ATP hydrolysis. Mg(2+) is required as a cofactor. Requires Mn(2+) as cofactor. Ca(2+) serves as cofactor.

Its subcellular location is the cytoplasm. The catalysed reaction is ATP-dependent breakage, passage and rejoining of double-stranded DNA.. In terms of biological role, a type II topoisomerase that negatively supercoils closed circular double-stranded (ds) DNA in an ATP-dependent manner to modulate DNA topology and maintain chromosomes in an underwound state. Negative supercoiling favors strand separation, and DNA replication, transcription, recombination and repair, all of which involve strand separation. Also able to catalyze the interconversion of other topological isomers of dsDNA rings, including catenanes and knotted rings. Type II topoisomerases break and join 2 DNA strands simultaneously in an ATP-dependent manner. The polypeptide is DNA gyrase subunit B (Clostridium acetobutylicum (strain ATCC 824 / DSM 792 / JCM 1419 / IAM 19013 / LMG 5710 / NBRC 13948 / NRRL B-527 / VKM B-1787 / 2291 / W)).